The sequence spans 112 residues: Transmembrane protein 14C (112 aa).

4 consecutive transmembrane segments (helical) span residues 7–27 (VVPL…GGII), 32–52 (AGSV…SLGA), 62–82 (VWVF…RFYH), and 86–106 (FMPA…VGVS).

It belongs to the TMEM14 family.

Its subcellular location is the mitochondrion membrane. Functionally, required for normal heme biosynthesis. This chain is Transmembrane protein 14C (TMEM14C), found in Pongo abelii (Sumatran orangutan).